The primary structure comprises 379 residues: Cytochrome b (379 aa).

4 helical membrane-spanning segments follow: residues 33-53, 77-98, 113-133, and 178-198; these read FGSL…FLAM, WLIR…YLHI, WNVG…GYVL, and FFAF…VHLI. The heme b site is built by His-83 and His-97. Heme b is bound by residues His-182 and His-196. His-201 contributes to the a ubiquinone binding site. 4 helical membrane-spanning segments follow: residues 226–246, 288–308, 320–340, and 347–367; these read YKDI…ALFS, LGGV…PLLH, FTQV…WIGG, and FIII…VLAP.

It belongs to the cytochrome b family. The cytochrome bc1 complex contains 3 respiratory subunits (MT-CYB, CYC1 and UQCRFS1), 2 core proteins (UQCRC1 and UQCRC2) and probably 6 low-molecular weight proteins. Requires heme b as cofactor.

The protein localises to the mitochondrion inner membrane. Functionally, component of the ubiquinol-cytochrome c reductase complex (complex III or cytochrome b-c1 complex) that is part of the mitochondrial respiratory chain. The b-c1 complex mediates electron transfer from ubiquinol to cytochrome c. Contributes to the generation of a proton gradient across the mitochondrial membrane that is then used for ATP synthesis. This Poeciliopsis occidentalis (Gila topminnow) protein is Cytochrome b (mt-cyb).